The primary structure comprises 321 residues: Transcriptional activator protein Pur-alpha (321 aa).

The disordered stretch occupies residues 1 to 54 (MADRDSGSEQGGAALGSGGSLGHPGSGSGSGGGGGGGGGGGGSGGGGGAPGGLQ). Ala-2 carries the post-translational modification N-acetylalanine. Gly residues predominate over residues 9–51 (EQGGAALGSGGSLGHPGSGSGSGGGGGGGGGGGGSGGGGGAPG). Residue Ser-181 is modified to Phosphoserine. Over residues 294–313 (LHQQQQQQQEETTAATLLLQ) the composition is skewed to low complexity. Residues 294–321 (LHQQQQQQQEETTAATLLLQGEEEGEED) are disordered.

It belongs to the PUR DNA-binding protein family. As to quaternary structure, homodimer, heterodimer with PURB and heterotrimer with PURB and YBX1/Y-box protein 1. Interacts with FMR1; this interaction occurs in association with polyribosome.

It is found in the nucleus. In terms of biological role, this is a probable transcription activator that specifically binds the purine-rich single strand of the PUR element located upstream of the c-Myc gene. May play a role in the initiation of DNA replication and in recombination. The chain is Transcriptional activator protein Pur-alpha (Pura) from Mus musculus (Mouse).